The primary structure comprises 187 residues: Tumor necrosis factor ligand superfamily member 4 (187 aa).

At Met-1 to Lys-23 the chain is on the cytoplasmic side. A helical; Signal-anchor for type II membrane protein membrane pass occupies residues Leu-24 to Cys-44. Over Gln-45–Pro-187 the chain is Extracellular. Residues Pro-58–Ile-177 form the THD domain. Disulfide bonds link Cys-74/Cys-164 and Cys-101/Cys-185. Residues Asn-94 and Asn-156 are each glycosylated (N-linked (GlcNAc...) asparagine).

This sequence belongs to the tumor necrosis factor family. Homotrimer.

It localises to the membrane. In terms of biological role, cytokine that binds to TNFRSF4. Co-stimulates T-cell proliferation and cytokine production. In Oryctolagus cuniculus (Rabbit), this protein is Tumor necrosis factor ligand superfamily member 4 (TNFSF4).